The primary structure comprises 795 residues: Glycerol-3-phosphate acyltransferase 2, mitochondrial (795 aa).

The disordered stretch occupies residues 1-21; that stretch reads MATMLEGRCQTQPRSSPSGRE. At 1–305 the chain is on the cytoplasmic side; the sequence is MATMLEGRCQ…LGPRLSALGQ (305 aa). Residues 9–18 show a composition bias toward polar residues; the sequence is CQTQPRSSPS. The segment at 180 to 331 is acyltransferase; sequence QLHKGQMKMV…DALLVPVAVT (152 aa). Residues 205-210 carry the HXXXXD motif motif; sequence HKTLLD. A helical transmembrane segment spans residues 306–332; that stretch reads AWVGFVVQAVQVGIVPDALLVPVAVTY. The Mitochondrial intermembrane portion of the chain corresponds to 333–449; the sequence is DLVPDAPCDI…QLLVRRLSCH (117 aa). A helical membrane pass occupies residues 450–472; it reads VLSASVGSSAVMSTAIMATLLLF. Residues 473 to 795 lie on the Cytoplasmic side of the membrane; the sequence is KHQKLLGEFS…EQFIRQFICS (323 aa). A Phosphoserine modification is found at serine 656. Threonine 660 is modified (phosphothreonine). A phosphoserine mark is found at serine 662 and serine 664.

This sequence belongs to the GPAT/DAPAT family. Interacts with PIWIL2.

Its subcellular location is the mitochondrion outer membrane. It carries out the reaction sn-glycerol 3-phosphate + an acyl-CoA = a 1-acyl-sn-glycero-3-phosphate + CoA. The enzyme catalyses a 1-acyl-sn-glycero-3-phosphate + an acyl-CoA = a 1,2-diacyl-sn-glycero-3-phosphate + CoA. It catalyses the reaction 1-(9Z-octadecenoyl)-sn-glycero-3-phosphate + (9Z)-octadecenoyl-CoA = 1,2-di-(9Z-octadecenoyl)-sn-glycero-3-phosphate + CoA. The catalysed reaction is 1-(9Z-octadecenoyl)-sn-glycero-3-phosphate + (5Z,8Z,11Z,14Z)-eicosatetraenoyl-CoA = 1-(9Z)-octadecenoyl-2-(5Z,8Z,11Z,14Z)-eicosatetraenoyl-sn-glycero-3-phosphate + CoA. It carries out the reaction (5Z,8Z,11Z,14Z)-eicosatetraenoyl-CoA + sn-glycerol 3-phosphate = 1-(5Z,8Z,11Z,14Z-eicosatetraenoyl)-sn-glycero-3-phosphate + CoA. It participates in phospholipid metabolism; CDP-diacylglycerol biosynthesis; CDP-diacylglycerol from sn-glycerol 3-phosphate: step 1/3. With respect to regulation, inhibited by N-ethylmaleimide (NEM). In terms of biological role, transfers an acyl-group from acyl-ACP to the sn-1 position of glycerol-3-phosphate producing a lysophosphatidic acid (LPA), an essential step for the triacylglycerol (TAG) and glycerophospholipids. In vitro also transfers an acyl-group from acyl-ACP to the LPA producing a phosphatidic acid (PA). Prefers arachidonoyl-CoA as the acyl donor. Required for primary processing step during piRNA biosynthesis. Molecular mechanisms by which it promotes piRNA biosynthesis are unclear and do not involve its acyltransferase activity. The sequence is that of Glycerol-3-phosphate acyltransferase 2, mitochondrial from Homo sapiens (Human).